A 454-amino-acid chain; its full sequence is GA-binding protein alpha chain (454 aa).

Residues 168 to 251 (AALEGYRKEQ…SHLELLRKYV (84 aa)) enclose the PNT domain. Residues 297-316 (QRAPRISGEDRSSPGNRTGN) are disordered. A Phosphoserine modification is found at S303. Positions 320-400 (IQLWQFLLEL…QGKRFVYKFV (81 aa)) form a DNA-binding region, ETS.

The protein belongs to the ETS family. In terms of assembly, heterotetramer of two alpha and two beta subunits.

It is found in the nucleus. Its function is as follows. Transcription factor capable of interacting with purine rich repeats (GA repeats). Positively regulates transcription of transcriptional repressor RHIT/ZNF205. Functionally, (Microbial infection) Necessary for the expression of the Adenovirus E4 gene. This is GA-binding protein alpha chain (GABPA) from Homo sapiens (Human).